The chain runs to 459 residues: F-box protein At1g47340 (459 aa).

In terms of domain architecture, F-box spans 31–76 (FMVSVSLPKELILEILKRLPAKSVKRFHCVSKQWASMLSCPHFREL). Residues 434 to 459 (AKIEWEEEEEEDEDEDQEKEEEDQWS) are disordered. The segment covering 438-459 (WEEEEEEDEDEDQEKEEEDQWS) has biased composition (acidic residues).

This is F-box protein At1g47340 from Arabidopsis thaliana (Mouse-ear cress).